The primary structure comprises 671 residues: UBA domain-containing protein RUP1 (671 aa).

The region spanning 1–41 (MMDNQAVKSLLEMGIPHEVAVDALQRTGGNLEAAVNFIFSN) is the UBA domain. The residue at position 56 (serine 56) is a Phosphoserine. Positions 68–87 (GTKPCDVPNNGDQDIDMPDV) are disordered. Residues 432 to 501 (SKRKQARTRS…LNSARAAKME (70 aa)) are a coiled coil. Residues 643–671 (DGMGDPEQATNNINNGNDNDNDDDIDSDN) are disordered. Residues 661 to 671 (NDNDDDIDSDN) show a composition bias toward acidic residues.

Forms a ternary complex with RSP5 and UBP2.

Its subcellular location is the cytoplasm. The protein resides in the nucleus. Functionally, modulates the activity of the RSP5 HECT ubiquitin-protein ligase through its mediation of the interaction between RSP5 and the deubiquitinase UBP2. Involved in regulation of cell wall homeostasis. The chain is UBA domain-containing protein RUP1 (RUP1) from Saccharomyces cerevisiae (strain ATCC 204508 / S288c) (Baker's yeast).